A 133-amino-acid chain; its full sequence is Small ribosomal subunit protein uS8 (133 aa).

The protein belongs to the universal ribosomal protein uS8 family. Part of the 30S ribosomal subunit. Contacts proteins S5 and S12.

One of the primary rRNA binding proteins, it binds directly to 16S rRNA central domain where it helps coordinate assembly of the platform of the 30S subunit. The sequence is that of Small ribosomal subunit protein uS8 from Gloeobacter violaceus (strain ATCC 29082 / PCC 7421).